The following is a 694-amino-acid chain: Elongation factor G (694 aa).

The tr-type G domain maps to 8-287 (EDYRNFGIMA…AVVEFLPAPT (280 aa)). Residues 17 to 24 (AHIDAGKT), 86 to 90 (DTPGH), and 140 to 143 (NKMD) contribute to the GTP site.

The protein belongs to the TRAFAC class translation factor GTPase superfamily. Classic translation factor GTPase family. EF-G/EF-2 subfamily.

The protein resides in the cytoplasm. Its function is as follows. Catalyzes the GTP-dependent ribosomal translocation step during translation elongation. During this step, the ribosome changes from the pre-translocational (PRE) to the post-translocational (POST) state as the newly formed A-site-bound peptidyl-tRNA and P-site-bound deacylated tRNA move to the P and E sites, respectively. Catalyzes the coordinated movement of the two tRNA molecules, the mRNA and conformational changes in the ribosome. This Brucella anthropi (strain ATCC 49188 / DSM 6882 / CCUG 24695 / JCM 21032 / LMG 3331 / NBRC 15819 / NCTC 12168 / Alc 37) (Ochrobactrum anthropi) protein is Elongation factor G.